The sequence spans 136 residues: Probable S-adenosyl-L-methionine-binding protein PH1056 (136 aa).

Positions 8–126 (IVPVGYIRKE…FPERYDCPKE (119 aa)) constitute a TsaA-like domain. S-adenosyl-L-methionine is bound by residues 48 to 49 (HK), R78, and 106 to 109 (EDGT).

Belongs to the tRNA methyltransferase O family.

The sequence is that of Probable S-adenosyl-L-methionine-binding protein PH1056 from Pyrococcus horikoshii (strain ATCC 700860 / DSM 12428 / JCM 9974 / NBRC 100139 / OT-3).